The sequence spans 227 residues: Acyl-protein thioesterase 1 (227 aa).

Catalysis depends on charge relay system residues Ser119, Asp173, and His207.

Belongs to the AB hydrolase superfamily. AB hydrolase 2 family.

The protein resides in the cytoplasm. The protein localises to the nucleus. The enzyme catalyses S-hexadecanoyl-L-cysteinyl-[protein] + H2O = L-cysteinyl-[protein] + hexadecanoate + H(+). Its function is as follows. Hydrolyzes fatty acids from S-acylated cysteine residues in proteins with a strong preference for palmitoylated G-alpha proteins over other acyl substrates. Mediates the deacylation of G-alpha proteins such as GPA1 in vivo, but has weak or no activity toward palmitoylated Ras proteins. Has weak lysophospholipase activity in vitro; however such activity may not exist in vivo. The protein is Acyl-protein thioesterase 1 of Yarrowia lipolytica (strain CLIB 122 / E 150) (Yeast).